A 189-amino-acid polypeptide reads, in one-letter code: Peptidyl-tRNA hydrolase (189 aa).

Tyrosine 15 is a tRNA binding site. Residue histidine 20 is the Proton acceptor of the active site. Residues phenylalanine 66, asparagine 68, and asparagine 114 each contribute to the tRNA site.

Belongs to the PTH family. As to quaternary structure, monomer.

It is found in the cytoplasm. The catalysed reaction is an N-acyl-L-alpha-aminoacyl-tRNA + H2O = an N-acyl-L-amino acid + a tRNA + H(+). In terms of biological role, hydrolyzes ribosome-free peptidyl-tRNAs (with 1 or more amino acids incorporated), which drop off the ribosome during protein synthesis, or as a result of ribosome stalling. Functionally, catalyzes the release of premature peptidyl moieties from peptidyl-tRNA molecules trapped in stalled 50S ribosomal subunits, and thus maintains levels of free tRNAs and 50S ribosomes. This Streptococcus suis (strain 98HAH33) protein is Peptidyl-tRNA hydrolase.